A 177-amino-acid chain; its full sequence is R-phycoerythrin beta chain (177 aa).

Phycourobilin is bound by residues C50 and C61. The residue at position 72 (N72) is an N4-methylasparagine. (2R,3E)-phycoerythrobilin contacts are provided by C82 and C158.

Belongs to the phycobiliprotein family. In terms of assembly, heterodimer of an alpha and a beta chain. Post-translationally, contains two covalently linked phycoerythrobilin chromophores and one covalently linked phycourobilin chromophore.

The protein localises to the plastid. The protein resides in the chloroplast thylakoid membrane. Functionally, light-harvesting photosynthetic bile pigment-protein from the phycobiliprotein complex. The chain is R-phycoerythrin beta chain (cpeB) from Pyropia yezoensis (Susabi-nori).